The following is an 88-amino-acid chain: Putative membrane protein insertion efficiency factor (88 aa).

A disordered region spans residues 66–88 (DFVPPKKEKNADSEHSCKAHHHH). Over residues 69 to 82 (PPKKEKNADSEHSC) the composition is skewed to basic and acidic residues.

Belongs to the UPF0161 family.

It is found in the cell membrane. Could be involved in insertion of integral membrane proteins into the membrane. The protein is Putative membrane protein insertion efficiency factor of Listeria monocytogenes serotype 4b (strain CLIP80459).